The sequence spans 228 residues: Ephrin-A5 (228 aa).

A signal peptide spans 1 to 20; the sequence is MLHVEMLTLVFLVLWMCVFS. One can recognise an Ephrin RBD domain in the interval 29-162; sequence ADRYAVYWNS…KLKVFVRPTN (134 aa). N-linked (GlcNAc...) asparagine glycosylation is present at N37. 2 disulfide bridges follow: C62–C102 and C90–C151. The segment at 186-205 is disordered; sequence EPADDTVHESAEPSRGENAA. Residues 190–200 show a composition bias toward basic and acidic residues; it reads DTVHESAEPSR. The GPI-anchor amidated asparagine moiety is linked to residue N203. The propeptide at 204 to 228 is removed in mature form; sequence AAQTPRIPSRLLAILLFLLAMLLTL.

Belongs to the ephrin family. As to quaternary structure, binds to EPHB2. Interacts with EPHA8; activates EPHA8. Binds to the receptor tyrosine kinases EPHA2, EPHA3 and EPHB1. Forms a ternary EFNA5-EPHA3-ADAM10 complex mediating EFNA5 extracellular domain shedding by ADAM10 which regulates the EFNA5-EPHA3 complex internalization and function.

Its subcellular location is the cell membrane. The protein localises to the membrane. It is found in the caveola. In terms of biological role, cell surface GPI-bound ligand for Eph receptors, a family of receptor tyrosine kinases which are crucial for migration, repulsion and adhesion during neuronal, vascular and epithelial development. Binds promiscuously Eph receptors residing on adjacent cells, leading to contact-dependent bidirectional signaling into neighboring cells. The signaling pathway downstream of the receptor is referred to as forward signaling while the signaling pathway downstream of the ephrin ligand is referred to as reverse signaling. Induces compartmentalized signaling within a caveolae-like membrane microdomain when bound to the extracellular domain of its cognate receptor. This signaling event requires the activity of the Fyn tyrosine kinase. Activates the EPHA3 receptor to regulate cell-cell adhesion and cytoskeletal organization. With the receptor EPHA2 may regulate lens fiber cells shape and interactions and be important for lens transparency maintenance. May function actively to stimulate axon fasciculation. The interaction of EFNA5 with EPHA5 also mediates communication between pancreatic islet cells to regulate glucose-stimulated insulin secretion. Cognate/functional ligand for EPHA7, their interaction regulates brain development modulating cell-cell adhesion and repulsion. The sequence is that of Ephrin-A5 (EFNA5) from Homo sapiens (Human).